Consider the following 265-residue polypeptide: Glutamate racemase (265 aa).

Substrate is bound by residues 12–13 (DS) and 44–45 (YG). Cysteine 75 acts as the Proton donor/acceptor in catalysis. 76-77 (NT) is a substrate binding site. The active-site Proton donor/acceptor is the cysteine 186. 187–188 (TH) lines the substrate pocket.

It belongs to the aspartate/glutamate racemases family.

It catalyses the reaction L-glutamate = D-glutamate. It functions in the pathway cell wall biogenesis; peptidoglycan biosynthesis. Functionally, provides the (R)-glutamate required for cell wall biosynthesis. This is Glutamate racemase from Pseudomonas putida (strain W619).